The chain runs to 326 residues: Acetyl-coenzyme A carboxylase carboxyl transferase subunit alpha (326 aa).

The region spanning 46-300 (EIEARAAELR…KEALLRHLDE (255 aa)) is the CoA carboxyltransferase C-terminal domain.

This sequence belongs to the AccA family. In terms of assembly, acetyl-CoA carboxylase is a heterohexamer composed of biotin carboxyl carrier protein (AccB), biotin carboxylase (AccC) and two subunits each of ACCase subunit alpha (AccA) and ACCase subunit beta (AccD).

It is found in the cytoplasm. It catalyses the reaction N(6)-carboxybiotinyl-L-lysyl-[protein] + acetyl-CoA = N(6)-biotinyl-L-lysyl-[protein] + malonyl-CoA. Its pathway is lipid metabolism; malonyl-CoA biosynthesis; malonyl-CoA from acetyl-CoA: step 1/1. Component of the acetyl coenzyme A carboxylase (ACC) complex. First, biotin carboxylase catalyzes the carboxylation of biotin on its carrier protein (BCCP) and then the CO(2) group is transferred by the carboxyltransferase to acetyl-CoA to form malonyl-CoA. This chain is Acetyl-coenzyme A carboxylase carboxyl transferase subunit alpha, found in Gloeobacter violaceus (strain ATCC 29082 / PCC 7421).